The primary structure comprises 468 residues: 6-phospho-beta-galactosidase (468 aa).

Residues glutamine 19, histidine 116, asparagine 159, glutamate 160, and asparagine 297 each coordinate D-galactose 6-phosphate. Glutamate 160 serves as the catalytic Proton donor. The active-site Nucleophile is the glutamate 375. Residues serine 428, tryptophan 429, lysine 435, and tyrosine 437 each contribute to the D-galactose 6-phosphate site.

It belongs to the glycosyl hydrolase 1 family.

The enzyme catalyses a 6-phospho-beta-D-galactoside + H2O = D-galactose 6-phosphate + an alcohol. Its pathway is carbohydrate metabolism; lactose degradation; D-galactose 6-phosphate and beta-D-glucose from lactose 6-phosphate: step 1/1. This Streptococcus agalactiae serotype III (strain NEM316) protein is 6-phospho-beta-galactosidase.